The sequence spans 302 residues: Mas-related G-protein coupled receptor member A3 (302 aa).

The Extracellular portion of the chain corresponds to 1-17; the sequence is MNETIPGSIDIETLIPD. An N-linked (GlcNAc...) asparagine glycan is attached at asparagine 2. The helical transmembrane segment at 18 to 38 threads the bilayer; that stretch reads LMIIIFGLVGLTGNAIVFWLL. The Cytoplasmic portion of the chain corresponds to 39–46; sequence GFRMHRTA. A helical membrane pass occupies residues 47–67; the sequence is FLVYILNLALADFLFLLCHII. Residue asparagine 68 is glycosylated (N-linked (GlcNAc...) asparagine). Topologically, residues 68-81 are extracellular; that stretch reads NSTVDLLKFTLPKG. The chain crosses the membrane as a helical span at residues 82–102; the sequence is IFAFCFHTIKRVLYITGLSML. The Cytoplasmic segment spans residues 103–129; the sequence is SAISTERCLSVLCPIWYHCRRPEHTST. Residues 130-150 form a helical membrane-spanning segment; the sequence is VMCAVIWVLSLLICILDGYFC. Residues 151–167 are Extracellular-facing; that stretch reads GYLDNHYFNYSVCQAWD. The N-linked (GlcNAc...) asparagine glycan is linked to asparagine 159. Residues 168-188 form a helical membrane-spanning segment; the sequence is IFIGAYLMFLFVVLCLSTLAL. Over 189–211 the chain is Cytoplasmic; it reads LARLFCGARNMKFTRLFVTIMLT. A helical membrane pass occupies residues 212 to 232; that stretch reads VLVFLLCGLPWGITWFLLFWI. The Extracellular portion of the chain corresponds to 233–242; the sequence is APGVFVLDYS. The helical transmembrane segment at 243 to 263 threads the bilayer; that stretch reads PLLVLTAINSCANPIIYFFVG. Residues 264–302 are Cytoplasmic-facing; that stretch reads SFRQRLNKQTLKMVLQKALQDTPETPENMVEMSRNKAEP.

This sequence belongs to the G-protein coupled receptor 1 family. Mas subfamily. Expressed exclusively in dorsal root ganglia and nodose ganglia. Expressed in a subset of sensory neurons that includes nociceptors. Expressed in the subclass of non-peptidergic sensory neurons that are IB4(+) and VR1(-).

It localises to the cell membrane. Orphan receptor. May be a receptor for RFamide-family neuropeptides such as NPFF and NPAF, which are analgesic in vivo. May regulate nociceptor function and/or development, including the sensation or modulation of pain. Activated by the antimalarial drug chloroquine. Mediates chloroquine-induced itch, in a histamine-independent manner. In Mus musculus (Mouse), this protein is Mas-related G-protein coupled receptor member A3 (Mrgpra3).